A 455-amino-acid chain; its full sequence is F-box/FBD/LRR-repeat protein At3g51530 (455 aa).

A disordered region spans residues 1–26 (MKNSERFSAAKPLMEQGGKSSRKPGF). Residues 29-75 (EDRISELPEVLLLQILSSLPTKLVISTSVLSKRWLSLWKMVQRLEFE) form the F-box domain. LRR repeat units follow at residues 80–106 (IYDFAENVTRSLLSHKAPVLESLHLKV), 155–182 (ETLKLDYVYIYVPCPVSMKSLRTLHLLS), 183–208 (VVYKGDESGHNLFASCPNLEHLVLRR), 227–257 (TLLLSDPFSARESSRGYVIKAPSLKYLGIES), 277–302 (IRNVSKIVNENILGSLKSAKRLSLDL), and 325–351 (THKVEWWNLLTHMLDSSPKLQVLKLID). One can recognise an FBD domain in the interval 370-417 (KWNQPKYVPECLETFMWRNCNWGREEEKEVATYILRNARQLKKATFST).

In Arabidopsis thaliana (Mouse-ear cress), this protein is F-box/FBD/LRR-repeat protein At3g51530.